Reading from the N-terminus, the 320-residue chain is Fructose-1,6-bisphosphatase class 1 (320 aa).

Glu-84, Asp-103, Leu-105, and Asp-106 together coordinate Mg(2+). Residues 106–109, Asn-196, and Lys-262 contribute to the substrate site; that span reads DGSS. Glu-268 serves as a coordination point for Mg(2+).

The protein belongs to the FBPase class 1 family. As to quaternary structure, homotetramer. Mg(2+) is required as a cofactor.

The protein resides in the cytoplasm. The enzyme catalyses beta-D-fructose 1,6-bisphosphate + H2O = beta-D-fructose 6-phosphate + phosphate. It participates in carbohydrate biosynthesis; gluconeogenesis. This Shewanella amazonensis (strain ATCC BAA-1098 / SB2B) protein is Fructose-1,6-bisphosphatase class 1.